The primary structure comprises 437 residues: Cobyrinate a,c-diamide synthase (437 aa).

Positions 243 to 433 constitute a GATase cobBQ-type domain; the sequence is IAAIAYDSAF…SHFHFSSARG (191 aa). Residue C324 is the Nucleophile of the active site.

This sequence belongs to the CobB/CbiA family. It depends on Mg(2+) as a cofactor.

It carries out the reaction cob(II)yrinate + 2 L-glutamine + 2 ATP + 2 H2O = cob(II)yrinate a,c diamide + 2 L-glutamate + 2 ADP + 2 phosphate + 2 H(+). It participates in cofactor biosynthesis; adenosylcobalamin biosynthesis; cob(II)yrinate a,c-diamide from sirohydrochlorin (anaerobic route): step 10/10. In terms of biological role, catalyzes the ATP-dependent amidation of the two carboxylate groups at positions a and c of cobyrinate, using either L-glutamine or ammonia as the nitrogen source. This chain is Cobyrinate a,c-diamide synthase, found in Sulfurisphaera tokodaii (strain DSM 16993 / JCM 10545 / NBRC 100140 / 7) (Sulfolobus tokodaii).